The chain runs to 1892 residues: Plexin A3 (1892 aa).

The N-terminal stretch at 1–20 (MRSLWLLVFSFSVLTGTNMA) is a signal peptide. In terms of domain architecture, Sema spans 21–509 (FPMILSERPE…SDKQVSRLPV (489 aa)). Topologically, residues 21-1240 (FPMILSERPE…IYSDSTLTLP (1220 aa)) are extracellular. Asn68 carries N-linked (GlcNAc...) asparagine glycosylation. Intrachain disulfides connect Cys86–Cys95, Cys121–Cys129, Cys283–Cys404, Cys299–Cys355, Cys373–Cys392, Cys512–Cys529, Cys518–Cys560, Cys521–Cys538, and Cys532–Cys544. N-linked (GlcNAc...) asparagine glycosylation is present at Asn569. Cys595 and Cys615 are joined by a disulfide. 4 consecutive IPT/TIG domains span residues 861 to 955 (PRIT…YSFV), 957 to 1041 (PSFS…YIYT), 1044 to 1143 (PNIS…FTYY), and 1146 to 1232 (PTFE…LHIY). Asn1183 is a glycosylation site (N-linked (GlcNAc...) asparagine). The helical transmembrane segment at 1241 to 1261 (AIIGIGAGGGVLLIAIIAVLI) threads the bilayer. Positions 1262–1315 (AYKRKTRDADRTLKRLQLQMDNLESRVALECKEAFAELQTDIQELTNDMDGVKI) form a coiled coil. At 1262–1892 (AYKRKTRDAD…QAINLMSGSS (631 aa)) the chain is on the cytoplasmic side.

The protein belongs to the plexin family. Detected in primary motor neurons in the embryonic nervous system.

The protein localises to the cell membrane. Functionally, coreceptor for class 3 semaphorins. Necessary for signaling by class 3 semaphorins and subsequent remodeling of the cytoskeleton. Plays a role in axon guidance in the developing nervous system. Class 3 semaphorins bind to a complex composed of a neuropilin and a plexin. The plexin modulates the affinity of the complex for specific semaphorins, and its cytoplasmic domain is required for the activation of down-stream signaling events in the cytoplasm. This Danio rerio (Zebrafish) protein is Plexin A3 (plxna3).